The chain runs to 509 residues: Maturase K (509 aa).

It belongs to the intron maturase 2 family. MatK subfamily.

It is found in the plastid. The protein localises to the chloroplast. Usually encoded in the trnK tRNA gene intron. Probably assists in splicing its own and other chloroplast group II introns. The chain is Maturase K from Clematis vitalba (Evergreen clematis).